The following is a 347-amino-acid chain: NADH-ubiquinone oxidoreductase chain 2 (347 aa).

A run of 11 helical transmembrane segments spans residues 3 to 23 (PLIFTMILLTVMLGTAIVMTT), 25 to 45 (HWVMAWIGFEMNMLAVIPILM), 59 to 79 (YFLTQATASMLLMLAIVINLV), 96 to 116 (IIMTLALAMKLGLAPFHFWVP), 122 to 142 (VQLSSGLILLTWQKLAPMSIL), 149 to 169 (INLDLLLLMSLLSILVGGWGG), 178 to 198 (IMAYSSIAHMGWMTAIMVYNP), 200 to 220 (MALLNLVIYILLTTTTFMMLM), 240 to 260 (LTTAILTIMLSLGGLPPLSGF), 276 to 296 (MIMPTIMAVMALLNLYFYMRL), and 326 to 346 (LSPLIILSTLILPLSPMLALL).

It belongs to the complex I subunit 2 family. As to quaternary structure, core subunit of respiratory chain NADH dehydrogenase (Complex I) which is composed of 45 different subunits. Interacts with TMEM242.

It localises to the mitochondrion inner membrane. The catalysed reaction is a ubiquinone + NADH + 5 H(+)(in) = a ubiquinol + NAD(+) + 4 H(+)(out). Its function is as follows. Core subunit of the mitochondrial membrane respiratory chain NADH dehydrogenase (Complex I) which catalyzes electron transfer from NADH through the respiratory chain, using ubiquinone as an electron acceptor. Essential for the catalytic activity and assembly of complex I. In Nyctimene albiventer (Common tube-nosed fruit bat), this protein is NADH-ubiquinone oxidoreductase chain 2.